The primary structure comprises 279 residues: MLCLGLVVMRCQPLRRALNCSQGWWIIKIDIYDVFIGKSAFGNPCGVLELNGWLSDSELHQITREVGQPVTSFITHVDGRFHIRWFALDGEINLCGHGSLGAGAAILSKYQLENVVFNSKYGEVVISKRDDQYSLVLPSWEAKPCAVPVEISDLATDAIDVFSTRDLVLVLPSVEAVMNFQPDDDRLREINEYHALIVTAANGNSGYVLRYFAPKIGISEDLATGSAQCSLAPYWFKKLGSDALNARQLSMSGGYFEVERTTENSITVFAQAKRRAIAI.

The protein belongs to the PhzF family.

This is an uncharacterized protein from Vibrio cholerae serotype O1 (strain ATCC 39315 / El Tor Inaba N16961).